Consider the following 462-residue polypeptide: NAD-capped RNA hydrolase NUDT12 (462 aa).

ANK repeat units lie at residues 11-40, 45-74, and 78-98; these read EIVT…SLLN, NGWT…DRSI, and SRQT…ANLL. K185 is modified (N6-succinyllysine). C284 and C287 together coordinate Zn(2+). The residue at position 292 (K292) is an N6-succinyllysine. Residues C302 and C307 each coordinate Zn(2+). Residues Y318, 354–356, E370, E374, and E415 each bind substrate; that span reads AGF. In terms of domain architecture, Nudix hydrolase spans 319 to 453; it reads PRVDPVVIMQ…SRAIAHQLIK (135 aa). Residues A354, E370, E374, and E415 each contribute to the Mg(2+) site. The Nudix box motif lies at 355–376; that stretch reads GFIEPGETIEDAVRREVEEESG. Residues 460 to 462 carry the Microbody targeting signal motif; it reads PNL.

It belongs to the Nudix hydrolase family. NudC subfamily. Homodimer. Homodimerization is essential for its catalytic activity and protein stability. Interacts (via ANK repeats) with BLMH. Mg(2+) serves as cofactor. Requires Zn(2+) as cofactor.

It localises to the cytoplasm. Its subcellular location is the peroxisome. It is found in the cytoplasmic granule. The catalysed reaction is a 5'-end NAD(+)-phospho-ribonucleoside in mRNA + H2O = a 5'-end phospho-adenosine-phospho-ribonucleoside in mRNA + beta-nicotinamide D-ribonucleotide + 2 H(+). The enzyme catalyses NAD(+) + H2O = beta-nicotinamide D-ribonucleotide + AMP + 2 H(+). It catalyses the reaction NADH + H2O = reduced beta-nicotinamide D-ribonucleotide + AMP + 2 H(+). It carries out the reaction NADPH + H2O = reduced beta-nicotinamide D-ribonucleotide + adenosine 2',5'-bisphosphate + 2 H(+). MRNA decapping enzyme that specifically removes the nicotinamide adenine dinucleotide (NAD) cap from a subset of mRNAs by hydrolyzing the diphosphate linkage to produce nicotinamide mononucleotide (NMN) and 5' monophosphate mRNA. The NAD-cap is present at the 5'-end of some RNAs; in contrast to the canonical N7 methylguanosine (m7G) cap, the NAD cap promotes mRNA decay. Preferentially acts on NAD-capped transcripts in response to nutrient stress. Also acts on free nicotinamide adenine dinucleotide molecules: hydrolyzes NAD(H) into NMN(H) and AMP, and NADPH into NMNH and 2',5'-ADP. May act to regulate the concentration of peroxisomal nicotinamide nucleotide cofactors required for oxidative metabolism in this organelle. Regulates the levels of circadian clock components PER1, PER2, PER3 and CRY2 in the liver. The polypeptide is NAD-capped RNA hydrolase NUDT12 (Homo sapiens (Human)).